A 129-amino-acid polypeptide reads, in one-letter code: Small ribosomal subunit protein uS8 (129 aa).

It belongs to the universal ribosomal protein uS8 family. In terms of assembly, part of the 30S ribosomal subunit. Contacts proteins S5 and S12.

Functionally, one of the primary rRNA binding proteins, it binds directly to 16S rRNA central domain where it helps coordinate assembly of the platform of the 30S subunit. The polypeptide is Small ribosomal subunit protein uS8 (Legionella pneumophila (strain Corby)).